The sequence spans 342 residues: N-acetyl-gamma-glutamyl-phosphate reductase (342 aa).

C149 is a catalytic residue.

This sequence belongs to the NAGSA dehydrogenase family. Type 1 subfamily.

Its subcellular location is the cytoplasm. It catalyses the reaction N-acetyl-L-glutamate 5-semialdehyde + phosphate + NADP(+) = N-acetyl-L-glutamyl 5-phosphate + NADPH + H(+). Its pathway is amino-acid biosynthesis; L-arginine biosynthesis; N(2)-acetyl-L-ornithine from L-glutamate: step 3/4. Its function is as follows. Catalyzes the NADPH-dependent reduction of N-acetyl-5-glutamyl phosphate to yield N-acetyl-L-glutamate 5-semialdehyde. This Nitrosomonas europaea (strain ATCC 19718 / CIP 103999 / KCTC 2705 / NBRC 14298) protein is N-acetyl-gamma-glutamyl-phosphate reductase.